The primary structure comprises 127 residues: Methylglyoxal synthase (127 aa).

Residues 1 to 127 (MEGQRCIALI…ENLIDFNSAD (127 aa)) form the MGS-like domain. Substrate contacts are provided by residues His-12, Lys-16, 38–41 (TGTT), and 59–60 (SG). Asp-65 functions as the Proton donor/acceptor in the catalytic mechanism. Residue His-92 participates in substrate binding.

This sequence belongs to the methylglyoxal synthase family.

The catalysed reaction is dihydroxyacetone phosphate = methylglyoxal + phosphate. Catalyzes the formation of methylglyoxal from dihydroxyacetone phosphate. This is Methylglyoxal synthase from Agrobacterium fabrum (strain C58 / ATCC 33970) (Agrobacterium tumefaciens (strain C58)).